A 202-amino-acid polypeptide reads, in one-letter code: Large ribosomal subunit protein uL18 (202 aa).

This sequence belongs to the universal ribosomal protein uL18 family. In terms of assembly, part of the 50S ribosomal subunit. Contacts the 5S and 23S rRNAs.

In terms of biological role, this is one of the proteins that bind and probably mediate the attachment of the 5S RNA into the large ribosomal subunit, where it forms part of the central protuberance. This chain is Large ribosomal subunit protein uL18, found in Staphylothermus marinus (strain ATCC 43588 / DSM 3639 / JCM 9404 / F1).